The primary structure comprises 201 residues: Glycerol-3-phosphate acyltransferase (201 aa).

A run of 5 helical transmembrane segments spans residues 3 to 23 (LFAI…SAIL), 53 to 73 (WVAL…VWLG), 80 to 100 (HFEL…PIFF), 115 to 135 (IAPI…LIFF), and 153 to 175 (FYVW…LLIY).

This sequence belongs to the PlsY family. Probably interacts with PlsX.

The protein localises to the cell inner membrane. The catalysed reaction is an acyl phosphate + sn-glycerol 3-phosphate = a 1-acyl-sn-glycero-3-phosphate + phosphate. The protein operates within lipid metabolism; phospholipid metabolism. Functionally, catalyzes the transfer of an acyl group from acyl-phosphate (acyl-PO(4)) to glycerol-3-phosphate (G3P) to form lysophosphatidic acid (LPA). This enzyme utilizes acyl-phosphate as fatty acyl donor, but not acyl-CoA or acyl-ACP. In Pasteurella multocida (strain Pm70), this protein is Glycerol-3-phosphate acyltransferase.